A 100-amino-acid chain; its full sequence is Aspartyl/glutamyl-tRNA(Asn/Gln) amidotransferase subunit C (100 aa).

Belongs to the GatC family. In terms of assembly, heterotrimer of A, B and C subunits.

The enzyme catalyses L-glutamyl-tRNA(Gln) + L-glutamine + ATP + H2O = L-glutaminyl-tRNA(Gln) + L-glutamate + ADP + phosphate + H(+). It catalyses the reaction L-aspartyl-tRNA(Asn) + L-glutamine + ATP + H2O = L-asparaginyl-tRNA(Asn) + L-glutamate + ADP + phosphate + 2 H(+). In terms of biological role, allows the formation of correctly charged Asn-tRNA(Asn) or Gln-tRNA(Gln) through the transamidation of misacylated Asp-tRNA(Asn) or Glu-tRNA(Gln) in organisms which lack either or both of asparaginyl-tRNA or glutaminyl-tRNA synthetases. The reaction takes place in the presence of glutamine and ATP through an activated phospho-Asp-tRNA(Asn) or phospho-Glu-tRNA(Gln). The protein is Aspartyl/glutamyl-tRNA(Asn/Gln) amidotransferase subunit C of Streptococcus pneumoniae (strain Taiwan19F-14).